A 281-amino-acid polypeptide reads, in one-letter code: NADPH-dependent 7-cyano-7-deazaguanine reductase (281 aa).

A substrate-binding site is contributed by 81–83 (IES). An NADPH-binding site is contributed by 83 to 84 (SK). Cys-188 serves as the catalytic Thioimide intermediate. The active-site Proton donor is the Asp-195. Substrate is bound at residue 227–228 (HE). NADPH is bound at residue 256–257 (RG).

Belongs to the GTP cyclohydrolase I family. QueF type 2 subfamily. Homodimer.

It is found in the cytoplasm. The catalysed reaction is 7-aminomethyl-7-carbaguanine + 2 NADP(+) = 7-cyano-7-deazaguanine + 2 NADPH + 3 H(+). It functions in the pathway tRNA modification; tRNA-queuosine biosynthesis. In terms of biological role, catalyzes the NADPH-dependent reduction of 7-cyano-7-deazaguanine (preQ0) to 7-aminomethyl-7-deazaguanine (preQ1). The polypeptide is NADPH-dependent 7-cyano-7-deazaguanine reductase (Polaromonas naphthalenivorans (strain CJ2)).